Reading from the N-terminus, the 150-residue chain is 6,7-dimethyl-8-ribityllumazine synthase (150 aa).

5-amino-6-(D-ribitylamino)uracil is bound by residues Phe11, 43 to 45 (VYD), and 67 to 69 (AVI). Position 72–73 (72–73 (AT)) interacts with (2S)-2-hydroxy-3-oxobutyl phosphate. The active-site Proton donor is His75. Leu100 contacts 5-amino-6-(D-ribitylamino)uracil. A (2S)-2-hydroxy-3-oxobutyl phosphate-binding site is contributed by Arg115.

The protein belongs to the DMRL synthase family.

It carries out the reaction (2S)-2-hydroxy-3-oxobutyl phosphate + 5-amino-6-(D-ribitylamino)uracil = 6,7-dimethyl-8-(1-D-ribityl)lumazine + phosphate + 2 H2O + H(+). Its pathway is cofactor biosynthesis; riboflavin biosynthesis; riboflavin from 2-hydroxy-3-oxobutyl phosphate and 5-amino-6-(D-ribitylamino)uracil: step 1/2. Catalyzes the formation of 6,7-dimethyl-8-ribityllumazine by condensation of 5-amino-6-(D-ribitylamino)uracil with 3,4-dihydroxy-2-butanone 4-phosphate. This is the penultimate step in the biosynthesis of riboflavin. This chain is 6,7-dimethyl-8-ribityllumazine synthase, found in Pyrobaculum arsenaticum (strain DSM 13514 / JCM 11321 / PZ6).